A 212-amino-acid polypeptide reads, in one-letter code: tRNA (guanine-N(7)-)-methyltransferase (212 aa).

S-adenosyl-L-methionine-binding residues include E44, D69, D96, and D118. D118 is an active-site residue. Position 122 (K122) interacts with substrate. The tract at residues 124-129 is interaction with RNA; sequence RHEKRR. Substrate is bound by residues D154 and 191–194; that span reads TEYE.

Belongs to the class I-like SAM-binding methyltransferase superfamily. TrmB family.

The enzyme catalyses guanosine(46) in tRNA + S-adenosyl-L-methionine = N(7)-methylguanosine(46) in tRNA + S-adenosyl-L-homocysteine. It participates in tRNA modification; N(7)-methylguanine-tRNA biosynthesis. In terms of biological role, catalyzes the formation of N(7)-methylguanine at position 46 (m7G46) in tRNA. This Streptococcus gordonii (strain Challis / ATCC 35105 / BCRC 15272 / CH1 / DL1 / V288) protein is tRNA (guanine-N(7)-)-methyltransferase.